We begin with the raw amino-acid sequence, 475 residues long: BTB/POZ domain-containing protein 10 (475 aa).

The disordered stretch occupies residues 1 to 144; that stretch reads MAGRPHPYDS…SQSSSDGSCK (144 aa). Over residues 22 to 31 the composition is skewed to basic residues; sequence LHSRPRKLYK. The span at 57 to 80 shows a compositional bias: basic and acidic residues; the sequence is GHERSRDRRRSSDRSRDSSHERAE. Over residues 81 to 94 the composition is skewed to polar residues; it reads SQLTPCIRNVTSPT. Basic and acidic residues predominate over residues 97-107; it reads HHIEREKDHSS. Residues 108–144 show a composition bias toward low complexity; the sequence is SRPSSPRPQRASPNGSMSSAGNSSRNSSQSSSDGSCK. An interaction with AKT family members region spans residues 146 to 475; the sequence is SGEMVFVYEN…LDPDAQNPML (330 aa). In terms of domain architecture, BTB spans 167 to 241; the sequence is ERVTLIVDNT…YKTGIIRCPD (75 aa). A disordered region spans residues 451 to 475; sequence ELDILPSHPASGNNDLDPDAQNPML.

In terms of assembly, interacts (via C-terminal 330-amino-acid region) with AKT1; AKT2 and AKT3. Interacts with PPP2CA and PPP1CA. As to expression, ubiquitously expressed (at protein level).

The protein resides in the nucleus. It is found in the cytoplasm. Plays a major role as an activator of AKT family members by inhibiting PPP2CA-mediated dephosphorylation, thereby keeping AKTs activated. Plays a role in preventing motor neuronal death and in accelerating the growth of pancreatic beta cells. This chain is BTB/POZ domain-containing protein 10 (Btbd10), found in Mus musculus (Mouse).